The sequence spans 220 residues: MTLQISAQVVKALRDKTGAGMMDCKKALQANNGNEEKALESLRQKGLASANKKSNRTAIEGLLESYIHTGGRIGVLVEVNCETDFVARRPEFQKLAKDIAMQIAASPNVEYVSTQDIPSEIINLEQRVEAGKDDLKNKPVDRIETIIEGRMKKRLKELSLLDQMFIRNQDISIEDLINQNIAVLGENIKIRRFVRFLLGGGEENLKVNFADEVADILNKK.

The protein belongs to the EF-Ts family.

It localises to the plastid. The protein localises to the chloroplast. In terms of biological role, associates with the EF-Tu.GDP complex and induces the exchange of GDP to GTP. It remains bound to the aminoacyl-tRNA.EF-Tu.GTP complex up to the GTP hydrolysis stage on the ribosome. The polypeptide is Elongation factor Ts, chloroplastic (tsf) (Pyropia yezoensis (Susabi-nori)).